A 124-amino-acid chain; its full sequence is Small ribosomal subunit protein uS12 (124 aa).

At Asp89 the chain carries 3-methylthioaspartic acid.

Belongs to the universal ribosomal protein uS12 family. Part of the 30S ribosomal subunit. Contacts proteins S8 and S17. May interact with IF1 in the 30S initiation complex.

In terms of biological role, with S4 and S5 plays an important role in translational accuracy. Functionally, interacts with and stabilizes bases of the 16S rRNA that are involved in tRNA selection in the A site and with the mRNA backbone. Located at the interface of the 30S and 50S subunits, it traverses the body of the 30S subunit contacting proteins on the other side and probably holding the rRNA structure together. The combined cluster of proteins S8, S12 and S17 appears to hold together the shoulder and platform of the 30S subunit. The sequence is that of Small ribosomal subunit protein uS12 from Shewanella putrefaciens (strain CN-32 / ATCC BAA-453).